Consider the following 65-residue polypeptide: Lantibiotic lacticin 3147 A2 (65 aa).

Positions M1–G36 are excised as a propeptide. T37 carries the 2-oxobutanoic acid modification. 2,3-didehydrobutyrine occurs at positions 38 and 41. Residues S45 and S48 each carry the 2,3-didehydroalanine (Ser) modification. Residues S52–C56 constitute a cross-link (lanthionine (Ser-Cys)). 2 consecutive cross-links (beta-methyllanthionine (Thr-Cys)) follow at residues T58–C61 and T62–C65.

Post-translationally, maturation of lantibiotics involves the enzymatic conversion of Thr, and Ser into dehydrated AA and the formation of thioether bonds with cysteine. This is followed by membrane translocation and cleavage of the modified precursor. In terms of processing, it is not established whether the 2,3-didehydrobutyrines are the E- or Z-isomers. In the NMR model they were assumed to be the Z-isomer.

Its subcellular location is the secreted. In terms of biological role, lanthionine-containing peptide antibiotic (lantibiotic) active on Gram-positive bacteria. The bactericidal activity of lantibiotics is based on depolarization of energized bacterial cytoplasmic membranes, initiated by the formation of aqueous transmembrane pores. When present individually lacticin 3147 A2 exhibits weak activity towards L.lactis strain AM2 and L.lactis strain HP, and no activity towards L.lactis strain IFPL359, but when combined with lacticin 3147 A1 it displays strong activity towards all three strains. The protein is Lantibiotic lacticin 3147 A2 of Lactococcus lactis subsp. lactis (Streptococcus lactis).